Reading from the N-terminus, the 396-residue chain is tRNA (guanine-N(7)-)-methyltransferase non-catalytic subunit wuho (396 aa).

4 WD repeats span residues 75 to 115 (KVEV…AQLL), 162 to 201 (GHLS…DIHS), 205 to 243 (GHKE…ELLL), and 302 to 342 (AGTW…RASG).

The protein belongs to the WD repeat TRM82 family. In terms of assembly, forms a heterodimer with the catalytic subunit Mettl1. Interacts with mei-P26 and weakly interacts with bgcn; required for the function or formation of the mei-P26-bgcn-bam-sxl complex. Interacts with nanos; may be involved in mei-P26-dependent derepression of the BMP signaling pathway. Interacts with Myc; the interaction may be mediated by mei-P26 and may be involved in the regulation of ribosome biogenesis. As to expression, in testis, it is present at high level in hub cells, a niche for germline stem cells of testis. Ubiquitously expressed in all testicular cells throughout spermatogenesis. Ubiquitously expressed in all germline and somatic cells of the ovary.

It localises to the nucleus. Its subcellular location is the cytoplasm. It participates in tRNA modification; N(7)-methylguanine-tRNA biosynthesis. Its function is as follows. Required for the Mettl1-dependent formation of N(7)-methylguanine at position 46 (m7G46) in tRNA. In the Mettl1-wuho methyltransferase complex, it is required to stabilize and induce conformational changes of the catalytic subunit. Required for binding of nanos mRNA and repression of translation by the mei-P26-bgcn-bam-sxl complex. May cooperate with mei-P26 and nanos to derepress the BMP signaling pathway. May cooperate with mei-P26 to suppress expression of a subset of microRNAs. May cooperate with mei-P26 to regulate bam expression levels in germline cells during gametogenesis. Required to promote mitosis to meiosis transition during gametogenesis. May regulate germline cell division in part by regulating ribosome biogenesis. In Drosophila pseudoobscura pseudoobscura (Fruit fly), this protein is tRNA (guanine-N(7)-)-methyltransferase non-catalytic subunit wuho.